Here is a 317-residue protein sequence, read N- to C-terminus: 17-beta-hydroxysteroid dehydrogenase type 6 (317 aa).

A signal peptide spans methionine 1–tryptophan 17. Phenylalanine 33–leucine 57 contributes to the NAD(+) binding site. N-linked (GlcNAc...) asparagine glycosylation is found at asparagine 71 and asparagine 161. Residue serine 164 participates in substrate binding. Tyrosine 176 (proton acceptor) is an active-site residue.

It belongs to the short-chain dehydrogenases/reductases (SDR) family. As to expression, detected in liver.

The protein resides in the microsome membrane. The protein localises to the early endosome membrane. The enzyme catalyses all-trans-retinol--[retinol-binding protein] + NAD(+) = all-trans-retinal--[retinol-binding protein] + NADH + H(+). It carries out the reaction all-trans-retinol + NAD(+) = all-trans-retinal + NADH + H(+). It catalyses the reaction androsterone + NAD(+) = 5alpha-androstan-3,17-dione + NADH + H(+). The catalysed reaction is testosterone + NAD(+) = androst-4-ene-3,17-dione + NADH + H(+). The enzyme catalyses 5alpha-androstane-3alpha,17beta-diol + NAD(+) = 17beta-hydroxy-5alpha-androstan-3-one + NADH + H(+). It carries out the reaction 17beta-estradiol + NAD(+) = estrone + NADH + H(+). It catalyses the reaction 17beta-estradiol + NADP(+) = estrone + NADPH + H(+). The catalysed reaction is 3alpha-hydroxy-5alpha-pregnan-20-one + NAD(+) = 5alpha-pregnane-3,20-dione + NADH + H(+). The enzyme catalyses 5alpha-androstane-3beta,17beta-diol + NAD(+) = 17beta-hydroxy-5alpha-androstan-3-one + NADH + H(+). It carries out the reaction 3beta-hydroxy-5alpha-androstan-17-one + NAD(+) = 5alpha-androstan-3,17-dione + NADH + H(+). Its activity is regulated as follows. Inhibited by carbenoxolone and phenyl arsenoxide. Its function is as follows. NAD-dependent oxidoreductase with broad substrate specificity that shows both oxidative and reductive activity (in vitro). Has 17-beta-hydroxysteroid dehydrogenase activity towards various steroids (in vitro). Converts 5-alpha-androstan-3-alpha,17-beta-diol to androsterone and estradiol to estrone (in vitro). Has 3-alpha-hydroxysteroid dehydrogenase activity towards androsterone (in vitro). Has retinol dehydrogenase activity towards all-trans-retinol (in vitro). The protein is 17-beta-hydroxysteroid dehydrogenase type 6 (Hsd17b6) of Mus musculus (Mouse).